Here is a 392-residue protein sequence, read N- to C-terminus: NADH-quinone oxidoreductase subunit D 1 (392 aa).

The protein belongs to the complex I 49 kDa subunit family. As to quaternary structure, NDH-1 is composed of 14 different subunits. Subunits NuoB, C, D, E, F, and G constitute the peripheral sector of the complex.

It localises to the cell inner membrane. It carries out the reaction a quinone + NADH + 5 H(+)(in) = a quinol + NAD(+) + 4 H(+)(out). Functionally, NDH-1 shuttles electrons from NADH, via FMN and iron-sulfur (Fe-S) centers, to quinones in the respiratory chain. The immediate electron acceptor for the enzyme in this species is believed to be a menaquinone. Couples the redox reaction to proton translocation (for every two electrons transferred, four hydrogen ions are translocated across the cytoplasmic membrane), and thus conserves the redox energy in a proton gradient. The protein is NADH-quinone oxidoreductase subunit D 1 of Cytophaga hutchinsonii (strain ATCC 33406 / DSM 1761 / CIP 103989 / NBRC 15051 / NCIMB 9469 / D465).